A 405-amino-acid polypeptide reads, in one-letter code: MEYTEVMVRYGELSTKGKNRKDFINRLASNVEKVLKDLPQIDFHPRHDRMHIVLNGAPFAEVDKRLKKVFGIQTYSPAIKIPKTLEDIEKTSLELMQETFKPGMTFKVNTKRSDHKFEYDTNQLNNLVGDYLFDHIDHLKAEMKHPDLVLRIEVRQDAVYISNQLLHGIGGMPVGTAGKAVMMLSGGIDSPVASYLAMKRGVDIEMVHFFSPPYTTEKALAKAKELTGILANYVGKINFIAVPFAEIQETIKEKLPEGYLMTVQRRFMLQLADRIRAKRGGLAIFNGESVGQVASQTLQSMVAINDVTTTPVIRPVATMDKTEIIKLAEDIGTFDLSIQPFEDCCTIFAPPRPKTKPKLDKAREYEARLDVEGLIQRAMDGIEVMPIYPNEKFINDKIEEDQDLL.

In terms of domain architecture, THUMP spans 60 to 165 (AEVDKRLKKV…QDAVYISNQL (106 aa)). ATP contacts are provided by residues 183–184 (ML), 208–209 (HF), Arg-265, Gly-287, and Gln-296.

This sequence belongs to the ThiI family.

It localises to the cytoplasm. The enzyme catalyses [ThiI sulfur-carrier protein]-S-sulfanyl-L-cysteine + a uridine in tRNA + 2 reduced [2Fe-2S]-[ferredoxin] + ATP + H(+) = [ThiI sulfur-carrier protein]-L-cysteine + a 4-thiouridine in tRNA + 2 oxidized [2Fe-2S]-[ferredoxin] + AMP + diphosphate. It catalyses the reaction [ThiS sulfur-carrier protein]-C-terminal Gly-Gly-AMP + S-sulfanyl-L-cysteinyl-[cysteine desulfurase] + AH2 = [ThiS sulfur-carrier protein]-C-terminal-Gly-aminoethanethioate + L-cysteinyl-[cysteine desulfurase] + A + AMP + 2 H(+). The protein operates within cofactor biosynthesis; thiamine diphosphate biosynthesis. Functionally, catalyzes the ATP-dependent transfer of a sulfur to tRNA to produce 4-thiouridine in position 8 of tRNAs, which functions as a near-UV photosensor. Also catalyzes the transfer of sulfur to the sulfur carrier protein ThiS, forming ThiS-thiocarboxylate. This is a step in the synthesis of thiazole, in the thiamine biosynthesis pathway. The sulfur is donated as persulfide by IscS. The polypeptide is Probable tRNA sulfurtransferase (Lactobacillus helveticus (strain DPC 4571)).